The sequence spans 384 residues: Mitogen-activated protein kinase 8 (384 aa).

The Protein kinase domain maps to 26–321; sequence YQNLRPIGSG…VDEALQHPYI (296 aa). ATP-binding positions include 33-38 and Lys55; that span reads GSGAQG. Asp151 serves as the catalytic Proton acceptor. Thr183 bears the Phosphothreonine mark. A TXY motif is present at residues 183 to 185; the sequence is TPY. Tyr185 bears the Phosphotyrosine mark.

It belongs to the protein kinase superfamily. CMGC Ser/Thr protein kinase family. MAP kinase subfamily. Requires Mg(2+) as cofactor. Dually phosphorylated on Thr-183 and Tyr-185, which activates the enzyme.

It localises to the cytoplasm. The protein resides in the nucleus. The protein localises to the synapse. It carries out the reaction L-seryl-[protein] + ATP = O-phospho-L-seryl-[protein] + ADP + H(+). The catalysed reaction is L-threonyl-[protein] + ATP = O-phospho-L-threonyl-[protein] + ADP + H(+). Its activity is regulated as follows. Activated by threonine and tyrosine phosphorylation. In terms of biological role, responds to activation by environmental stress and pro-inflammatory cytokines by phosphorylating a number of transcription factors, primarily components of AP-1 such as c-Jun and ATF2 and thus regulates AP-1 transcriptional activity. May play a role in the regulation of the circadian clock. This chain is Mitogen-activated protein kinase 8 (mapk8), found in Danio rerio (Zebrafish).